A 493-amino-acid polypeptide reads, in one-letter code: V-type proton ATPase subunit B (493 aa).

Belongs to the ATPase alpha/beta chains family. As to quaternary structure, V-ATPase is a heteromultimeric enzyme composed of a peripheral catalytic V1 complex (main components: subunits A, B, C, D, E, and F) attached to an integral membrane V0 proton pore complex (main component: the proteolipid protein).

It is found in the cytoplasmic vesicle membrane. The protein resides in the endosome membrane. It localises to the contractile vacuole membrane. In terms of biological role, vacuolar ATPase is responsible for acidifying a variety of intracellular compartments in eukaryotic cells. The B subunit is non-catalytic but combines with other subunits to form the catalytic complex. V-ATPase is responsible for energizing electrophoretic K(+)/2H(+) antiport by generating a transmembrane voltage of more than 200 mV. This is V-type proton ATPase subunit B (vatB) from Dictyostelium discoideum (Social amoeba).